The sequence spans 533 residues: DNA-directed RNA polymerase III subunit RPC3 (533 aa).

The segment at 162–181 (LVPDTDSSDRGPPPPAPTLV) is disordered. Ser-194 bears the Phosphoserine mark. Residues 197 to 228 (GKGKRRRSSDEDATGEPKAKKPRYTDNKEPSP) form a disordered region. Positions 211–227 (GEPKAKKPRYTDNKEPS) are enriched in basic and acidic residues.

This sequence belongs to the eukaryotic RPC3/POLR3C RNA polymerase subunit family. Component of the RNA polymerase III complex consisting of 17 subunits: a ten-subunit horseshoe-shaped catalytic core composed of POLR3A/RPC1, POLR3B/RPC2, POLR1C/RPAC1, POLR1D/RPAC2, POLR3K/RPC10, POLR2E/RPABC1, POLR2F/RPABC2, POLR2H/RPABC3, POLR2K/RPABC4 and POLR2L/RPABC5; a mobile stalk composed of two subunits POLR3H/RPC8 and CRCP/RPC9, protruding from the core and functioning primarily in transcription initiation; and additional subunits homologous to general transcription factors of the RNA polymerase II machinery, POLR3C/RPC3-POLR3F/RPC6-POLR3G/RPC7 heterotrimer required for transcription initiation and POLR3D/RPC4-POLR3E/RPC5 heterodimer involved in both transcription initiation and termination. Directly interacts with POLR3G/RPC7 and POLR3GL. Directly interacts with POLR3F/RPC6. Interacts with GTF3C4. As part of the RNA polymerase III complex, interacts with PKP2.

It localises to the nucleus. Functionally, DNA-dependent RNA polymerase catalyzes the transcription of DNA into RNA using the four ribonucleoside triphosphates as substrates. Specific peripheric component of RNA polymerase III (Pol III) which synthesizes small non-coding RNAs including 5S rRNA, snRNAs, tRNAs and miRNAs from at least 500 distinct genomic loci. Part of POLR3C/RPC3-POLR3F/RPC6-POLR3G/RPC7 heterotrimer, coordinates the dynamics of Pol III stalk and clamp modules during the transition from apo to elongation state. Pol III plays a key role in sensing and limiting infection by intracellular bacteria and DNA viruses. Acts as a nuclear and cytosolic DNA sensor involved in innate immune response. Can sense non-self dsDNA that serves as template for transcription into dsRNA. The non-self RNA polymerase III transcripts, such as Epstein-Barr virus-encoded RNAs (EBERs) induce type I interferon and NF-kappa-B through the RIG-I pathway. Preferentially binds single-stranded DNA (ssDNA) in a sequence-independent manner. This Mus musculus (Mouse) protein is DNA-directed RNA polymerase III subunit RPC3.